The chain runs to 26 residues: Mitochondrial import receptor subunit TOM7-2 (26 aa).

The protein belongs to the Tom7 family. Forms part of the preprotein translocase complex of the outer mitochondrial membrane (TOM complex).

It localises to the mitochondrion outer membrane. In terms of biological role, seems to act as a modulator of the dynamics of the mitochondrial protein transport machinery. Seems to promote the dissociation of subunits of the outer membrane translocase. The chain is Mitochondrial import receptor subunit TOM7-2 (TOM7-2) from Solanum tuberosum (Potato).